The chain runs to 212 residues: Imidazole glycerol phosphate synthase subunit HisH (212 aa).

The Glutamine amidotransferase type-1 domain occupies 2-212 (QTAIIDYGMG…LTMLKNFLNW (211 aa)). Cys85 functions as the Nucleophile in the catalytic mechanism. Active-site residues include His194 and Glu196.

Heterodimer of HisH and HisF.

It localises to the cytoplasm. The enzyme catalyses 5-[(5-phospho-1-deoxy-D-ribulos-1-ylimino)methylamino]-1-(5-phospho-beta-D-ribosyl)imidazole-4-carboxamide + L-glutamine = D-erythro-1-(imidazol-4-yl)glycerol 3-phosphate + 5-amino-1-(5-phospho-beta-D-ribosyl)imidazole-4-carboxamide + L-glutamate + H(+). The catalysed reaction is L-glutamine + H2O = L-glutamate + NH4(+). The protein operates within amino-acid biosynthesis; L-histidine biosynthesis; L-histidine from 5-phospho-alpha-D-ribose 1-diphosphate: step 5/9. In terms of biological role, IGPS catalyzes the conversion of PRFAR and glutamine to IGP, AICAR and glutamate. The HisH subunit catalyzes the hydrolysis of glutamine to glutamate and ammonia as part of the synthesis of IGP and AICAR. The resulting ammonia molecule is channeled to the active site of HisF. The chain is Imidazole glycerol phosphate synthase subunit HisH from Neisseria gonorrhoeae (strain ATCC 700825 / FA 1090).